We begin with the raw amino-acid sequence, 293 residues long: 4-hydroxybenzoate octaprenyltransferase (293 aa).

8 consecutive transmembrane segments (helical) span residues 26–46 (IGTL…AKGM), 49–69 (IKVL…GCII), 102–122 (LFAL…PLVV), 148–168 (FLGI…LGEV), 173–193 (WWLF…YAMI), 217–237 (WIAV…LSAE), 240–260 (FIYA…QRLI), and 272–292 (FLNN…DYLL).

The protein belongs to the UbiA prenyltransferase family. The cofactor is Mg(2+).

It is found in the cell inner membrane. It catalyses the reaction all-trans-octaprenyl diphosphate + 4-hydroxybenzoate = 4-hydroxy-3-(all-trans-octaprenyl)benzoate + diphosphate. It participates in cofactor biosynthesis; ubiquinone biosynthesis. Its function is as follows. Catalyzes the prenylation of para-hydroxybenzoate (PHB) with an all-trans polyprenyl group. Mediates the second step in the final reaction sequence of ubiquinone-8 (UQ-8) biosynthesis, which is the condensation of the polyisoprenoid side chain with PHB, generating the first membrane-bound Q intermediate 3-octaprenyl-4-hydroxybenzoate. This Shewanella denitrificans (strain OS217 / ATCC BAA-1090 / DSM 15013) protein is 4-hydroxybenzoate octaprenyltransferase.